Consider the following 331-residue polypeptide: 2-hydroxyacid dehydrogenase homolog (331 aa).

NAD(+) contacts are provided by residues 154 to 155, 232 to 234, and Asp258; these read KI and TSR. Residue Arg234 is part of the active site. Residue Glu263 is part of the active site. Catalysis depends on His295, which acts as the Proton donor. NAD(+) is bound at residue 295 to 298; sequence HQAF.

It belongs to the D-isomer specific 2-hydroxyacid dehydrogenase family.

The polypeptide is 2-hydroxyacid dehydrogenase homolog (ddh) (Haemophilus influenzae (strain ATCC 51907 / DSM 11121 / KW20 / Rd)).